A 196-amino-acid polypeptide reads, in one-letter code: uncharacterized protein (196 aa).

A helical membrane pass occupies residues 22-42 (MIIIPMALLVFILIIGSFFAI).

It is found in the cell membrane. This is an uncharacterized protein from Lactobacillus acidophilus (strain ATCC 700396 / NCK56 / N2 / NCFM).